Consider the following 520-residue polypeptide: Chaperone Ric-8B (520 aa).

Position 468 is a phosphoserine (Ser468). Thr473 is modified (phosphothreonine).

This sequence belongs to the synembryn family. As to quaternary structure, interacts with GDP-bound G(s) G-alpha proteins GNAL and GNAS. Does not interact with G-alpha proteins when they are in complex with subunits beta and gamma. As to expression, predominantly expressed in the mature olfactory sensory neurons and also in a few regions in the brain.

The protein resides in the cytoplasm. It localises to the cell cortex. Its function is as follows. Chaperone that specifically binds and folds nascent G(s) G-alpha proteins (GNAS and GNAL) prior to G protein heterotrimer formation, promoting their association with the plasma membrane. Also acts as a guanine nucleotide exchange factor (GEF) for G(s) proteins by stimulating exchange of bound GDP for free GTP. Acts as an important component for odorant signal transduction by mediating GNAL (G(olf)-alpha) folding, thereby promoting-dependent cAMP accumulation in olfactory sensory neurons. This chain is Chaperone Ric-8B, found in Mus musculus (Mouse).